The following is a 549-amino-acid chain: T-complex protein 1 subunit theta (549 aa).

The protein belongs to the TCP-1 chaperonin family. Heterooligomeric complex of about 850 to 900 kDa that forms two stacked rings, 12 to 16 nm in diameter. Interacts with CCT3, KNAT1, STM and TTG1. In terms of tissue distribution, expressed in shoot meristems, root tip, vasculature and leaf epidermis.

It localises to the cytoplasm. Molecular chaperone; assists the folding of proteins upon ATP hydrolysis. Known to play a role, in vitro, in the folding of actin and tubulin. Contributes to stem cell maintenance through its impact on transcription factors trafficking through plasmodesmata. Probably involved in refolding translocated, partially unfolded proteins, including viral movement proteins. The chain is T-complex protein 1 subunit theta from Arabidopsis thaliana (Mouse-ear cress).